The following is a 213-amino-acid chain: Adenylate kinase (213 aa).

Position 10 to 15 (10 to 15 (GSGKGS)) interacts with ATP. Residues 30–60 (STGNLFRAILKEDSELARKIKEINVSGGKLV) form an NMP region. AMP-binding positions include T31, R36, 58–60 (KLV), 87–90 (GYPR), and Q94. The segment at 123–160 (GRWMCPKCAGIYNIHFKKPQVDGVCDNDQATLYQRADD) is LID. An ATP-binding site is contributed by R124. Zn(2+) contacts are provided by C127 and C130. 133 to 134 (IY) serves as a coordination point for ATP. Zn(2+) contacts are provided by C147 and D150. 2 residues coordinate AMP: R157 and R168. Q196 serves as a coordination point for ATP.

It belongs to the adenylate kinase family. Monomer.

Its subcellular location is the cytoplasm. The catalysed reaction is AMP + ATP = 2 ADP. Its pathway is purine metabolism; AMP biosynthesis via salvage pathway; AMP from ADP: step 1/1. In terms of biological role, catalyzes the reversible transfer of the terminal phosphate group between ATP and AMP. Plays an important role in cellular energy homeostasis and in adenine nucleotide metabolism. This chain is Adenylate kinase, found in Ureaplasma urealyticum serovar 10 (strain ATCC 33699 / Western).